A 331-amino-acid chain; its full sequence is Decarboxylase orsB (331 aa).

Residues His11, His157, and Asp284 each contribute to the Zn(2+) site.

The protein belongs to the metallo-dependent hydrolases superfamily. ACMSD family.

Its pathway is secondary metabolite biosynthesis. Decarboxylase; part of the gene cluster that mediates the biosynthesis of orsellinic acid, as well as of the cathepsin K inhibitors F9775 A and F9775 B. The non-reducing polyketide synthase orsA produces orsellinic acid by condensing acetyl-CoA with 3 malonyl-CoA units. Further modifications by the decarboxylase orsB and the tyrosinase-like protein orsC lead to the production of F9775 A and F9775 B. The functions of orsD and orsE remain unclear since only orsB and orsC are required to convert orsellinic acid into F9775 A and F9775 B. This Emericella nidulans (strain FGSC A4 / ATCC 38163 / CBS 112.46 / NRRL 194 / M139) (Aspergillus nidulans) protein is Decarboxylase orsB.